We begin with the raw amino-acid sequence, 241 residues long: Thiamine import ATP-binding protein ThiQ (241 aa).

Residues 7–235 (IRLSDVRFSY…AGPEALRHYI (229 aa)) form the ABC transporter domain. ATP is bound at residue 37 to 44 (GPSGSGKS).

This sequence belongs to the ABC transporter superfamily. Thiamine importer (TC 3.A.1.19.1) family. In terms of assembly, the complex is composed of two ATP-binding proteins (ThiQ), two transmembrane proteins (ThiP) and a solute-binding protein (ThiB).

It is found in the cell inner membrane. The catalysed reaction is thiamine(out) + ATP + H2O = thiamine(in) + ADP + phosphate + H(+). Functionally, part of the ABC transporter complex ThiBPQ involved in thiamine import. Responsible for energy coupling to the transport system. This chain is Thiamine import ATP-binding protein ThiQ, found in Brucella abortus biovar 1 (strain 9-941).